The primary structure comprises 1403 residues: Centrosomal protein of 162 kDa (1403 aa).

The disordered stretch occupies residues 18 to 42 (KELSDDSFENSDKTARQSKKEMKKK). Phosphoserine occurs at positions 157 and 160. Positions 170–231 (QANAELTDDE…EKISVPKQEE (62 aa)) are disordered. The span at 208 to 231 (TKDEEMPSKENSKSEKISVPKQEE) shows a compositional bias: basic and acidic residues. Phosphoserine occurs at positions 474 and 475. Residues 476–504 (EEEGAVMGKQVPYKKARSAPPLLKRKPQS) form a disordered region. Residues 487–502 (PYKKARSAPPLLKRKP) are compositionally biased toward basic residues. Coiled-coil stretches lie at residues 617–670 (KRVQ…QDNY), 698–1121 (VTGE…MLSN), 1171–1206 (EVLQENYRLKNELEGLISEKNELKMKSEAVMNQFEN), and 1235–1386 (CQNA…LHRQ).

It belongs to the CEP162 family. Interacts with CEP290. Interacts with CPNE4. Interacts with alpha-tubulin.

The protein localises to the cytoplasm. Its subcellular location is the cytoskeleton. It is found in the microtubule organizing center. The protein resides in the centrosome. It localises to the centriole. The protein localises to the spindle. Its subcellular location is the nucleus. Required to promote assembly of the transition zone in primary cilia. Acts by specifically recognizing and binding the axonemal microtubule. Localizes to the distal ends of centrioles before ciliogenesis and directly binds to axonemal microtubule, thereby promoting and restricting transition zone formation specifically at the cilia base. Required to mediate CEP290 association with microtubules. The protein is Centrosomal protein of 162 kDa (CEP162) of Homo sapiens (Human).